Consider the following 235-residue polypeptide: Probable transcriptional regulatory protein JJD26997_0557 (235 aa).

This sequence belongs to the TACO1 family.

Its subcellular location is the cytoplasm. The polypeptide is Probable transcriptional regulatory protein JJD26997_0557 (Campylobacter jejuni subsp. doylei (strain ATCC BAA-1458 / RM4099 / 269.97)).